A 281-amino-acid chain; its full sequence is Bifunctional protein FolD (281 aa).

Residues 164–166, I189, and I230 each bind NADP(+); that span reads GAS.

Belongs to the tetrahydrofolate dehydrogenase/cyclohydrolase family. In terms of assembly, homodimer.

It carries out the reaction (6R)-5,10-methylene-5,6,7,8-tetrahydrofolate + NADP(+) = (6R)-5,10-methenyltetrahydrofolate + NADPH. The catalysed reaction is (6R)-5,10-methenyltetrahydrofolate + H2O = (6R)-10-formyltetrahydrofolate + H(+). It participates in one-carbon metabolism; tetrahydrofolate interconversion. Its function is as follows. Catalyzes the oxidation of 5,10-methylenetetrahydrofolate to 5,10-methenyltetrahydrofolate and then the hydrolysis of 5,10-methenyltetrahydrofolate to 10-formyltetrahydrofolate. The sequence is that of Bifunctional protein FolD from Sulfurovum sp. (strain NBC37-1).